The sequence spans 283 residues: Pantothenate synthetase (283 aa).

30 to 37 (MGCLHEGH) provides a ligand contact to ATP. The active-site Proton donor is His-37. Gln-61 serves as a coordination point for (R)-pantoate. Residue Gln-61 participates in beta-alanine binding. Position 147–150 (147–150 (GQKD)) interacts with ATP. Position 153 (Gln-153) interacts with (R)-pantoate. ATP-binding positions include Val-176 and 184-187 (KSSR).

Belongs to the pantothenate synthetase family. As to quaternary structure, homodimer.

The protein resides in the cytoplasm. It carries out the reaction (R)-pantoate + beta-alanine + ATP = (R)-pantothenate + AMP + diphosphate + H(+). Its pathway is cofactor biosynthesis; (R)-pantothenate biosynthesis; (R)-pantothenate from (R)-pantoate and beta-alanine: step 1/1. Catalyzes the condensation of pantoate with beta-alanine in an ATP-dependent reaction via a pantoyl-adenylate intermediate. The polypeptide is Pantothenate synthetase (Clostridium novyi (strain NT)).